A 205-amino-acid chain; its full sequence is Inosine triphosphate pyrophosphatase (205 aa).

20-25 (TGNAKK) contributes to the ITP binding site. Glutamate 48 contributes to the Mg(2+) binding site. ITP is bound by residues lysine 60, 76–77 (DT), lysine 93, 152–155 (FGWD), lysine 175, and 180–181 (HR).

Belongs to the HAM1 NTPase family. In terms of assembly, homodimer. The cofactor is Mg(2+). Requires Mn(2+) as cofactor.

It is found in the cytoplasm. The enzyme catalyses ITP + H2O = IMP + diphosphate + H(+). It carries out the reaction dITP + H2O = dIMP + diphosphate + H(+). The catalysed reaction is XTP + H2O = XMP + diphosphate + H(+). Functionally, pyrophosphatase that hydrolyzes non-canonical purine nucleotides such as inosine triphosphate (ITP), deoxyinosine triphosphate (dITP) or xanthosine 5'-triphosphate (XTP) to their respective monophosphate derivatives. The enzyme does not distinguish between the deoxy- and ribose forms. Probably excludes non-canonical purines from RNA and DNA precursor pools, thus preventing their incorporation into RNA and DNA and avoiding chromosomal lesions. This Oryza sativa subsp. japonica (Rice) protein is Inosine triphosphate pyrophosphatase.